The primary structure comprises 394 residues: Beta-ketothiolase BktB (394 aa).

Catalysis depends on Cys-90, which acts as the Acyl-thioester intermediate. Catalysis depends on proton acceptor residues His-350 and Cys-380.

It belongs to the thiolase-like superfamily. Thiolase family.

The catalysed reaction is an acyl-CoA + acetyl-CoA = a 3-oxoacyl-CoA + CoA. It carries out the reaction 2 acetyl-CoA = acetoacetyl-CoA + CoA. Its function is as follows. Required for efficient production of poly(beta-hydroxybutyrate-co-beta-hydroxyvalerate) (PHBV). Catalyzes the condensation of acetyl-CoA and propionyl-CoA to form beta-ketovaleryl-CoA, and the condensation of two acetyl-CoA molecules to form acetoacetyl-CoA. In Cupriavidus necator (strain ATCC 17699 / DSM 428 / KCTC 22496 / NCIMB 10442 / H16 / Stanier 337) (Ralstonia eutropha), this protein is Beta-ketothiolase BktB (bktB).